A 102-amino-acid polypeptide reads, in one-letter code: Large ribosomal subunit protein bL21 (102 aa).

Over residues 79 to 91 the composition is skewed to basic residues; it reads RKDSKRKKGHRQP. Positions 79 to 102 are disordered; sequence RKDSKRKKGHRQPYTKLTIDKINA.

It belongs to the bacterial ribosomal protein bL21 family. In terms of assembly, part of the 50S ribosomal subunit. Contacts protein L20.

In terms of biological role, this protein binds to 23S rRNA in the presence of protein L20. The sequence is that of Large ribosomal subunit protein bL21 from Staphylococcus epidermidis (strain ATCC 35984 / DSM 28319 / BCRC 17069 / CCUG 31568 / BM 3577 / RP62A).